The primary structure comprises 222 residues: Proteoglycan 3 (222 aa).

Positions 1–17 (MKQPLILSFLLLGMVSA) are cleaved as a signal peptide. Residues 27-46 (NPKREESLKQEADGSREQGR) show a composition bias toward basic and acidic residues. The disordered stretch occupies residues 27–100 (NPKREESLKQ…PKEEDTTHFQ (74 aa)). Over residues 71-81 (FEDEEAMESDP) the composition is skewed to acidic residues. Positions 83–97 (ALNKDSACPKEEDTT) are enriched in basic and acidic residues. One can recognise a C-type lectin domain in the interval 105 to 221 (CKSCNYVLVR…CKSHLPFICS (117 aa)). Disulfide bonds link C126-C220 and C197-C212.

As to expression, expressed in bone marrow, spleen, and thymus. Not detected in heart, liver or lung.

In terms of biological role, possesses similar cytotoxic and cytostimulatory activities to PRG2/MBP. This chain is Proteoglycan 3, found in Mus musculus (Mouse).